A 296-amino-acid polypeptide reads, in one-letter code: Ribosomal RNA small subunit methyltransferase A (296 aa).

S-adenosyl-L-methionine-binding residues include N31, L33, G58, E79, D111, and N136.

The protein belongs to the class I-like SAM-binding methyltransferase superfamily. rRNA adenine N(6)-methyltransferase family. RsmA subfamily.

The protein localises to the cytoplasm. The catalysed reaction is adenosine(1518)/adenosine(1519) in 16S rRNA + 4 S-adenosyl-L-methionine = N(6)-dimethyladenosine(1518)/N(6)-dimethyladenosine(1519) in 16S rRNA + 4 S-adenosyl-L-homocysteine + 4 H(+). Specifically dimethylates two adjacent adenosines (A1518 and A1519) in the loop of a conserved hairpin near the 3'-end of 16S rRNA in the 30S particle. May play a critical role in biogenesis of 30S subunits. This chain is Ribosomal RNA small subunit methyltransferase A, found in Lactobacillus johnsonii (strain CNCM I-12250 / La1 / NCC 533).